The following is an 842-amino-acid chain: MEADPKVPFTDEMNIQDEHNWESGSWSSSRRSNDSNVTLLSRRSSVEQHEDERQKDSDTLFEHGDAALDAQGIADPRLKDYPIPLVAQTVHLRNDDSEPILTFRVWLLSTFWVLAGCSISTVYYFKPFSVRLSGYVVQLCTWKMGQLLASALPTRPFTVLGRRWTLNPGRWSAKEHALVVIAYWGSSYTAYGLGPLSAMELFYGKRLSSPWAITFLVTTQLTGYGLVGLYRHILVRPPSMYYPGILPTVSLFNAMHGDPRQTASSLRVFMAIASAAFVYQWLPSFVFPLLSSLPLLCWVGRGSWEAFVLGSGSLGFGLMDFSLDWNYVAFLSPLFTPLWANANRFVGAALAVWITYPVAYFSDALGSLRFPPMSSETFDTSGGLYNVSRIMTPSLELNQTALELYSTPRWSFSYAMHFFWGFASASAIVTYAVLFHGRTILKALANVWSLDGNTADDIDSEKDPYVKLTSHHARVPQAWYALLLAVCLCLGTIQLYAGDMQLPWWGLQLVVAISALFTLPCGMLFATANVQIGMDYVSEVLAGALFPGRPVAVLTATVYGRQVLEQCLNLASDLKLGFYMKIPEWELLVAQVYGTLLGPFVNWAVMRLIIDTQGAAALLGREGGDGKGQGLGLGQGGGGGGGGGGGGGQQQRAAGAHTTEWNALKTKNFFSSSVIWGVMGPARVFGGGDGSPSSSSPYRWLLPSGFAVGAAAVLLLWLIHKARPAWRVQQWPLHPAIIFHGASLFPVFPTTNLTSSMAAAVASMGVMRRWHPRWFARWNYLLGAGLDCGAQLVQMVLGLAFLVFNRHGQQMVRMPHWWGNDAVAVDQCFPPPDLPSVIMSPM.

The disordered stretch occupies residues 1-58; it reads MEADPKVPFTDEMNIQDEHNWESGSWSSSRRSNDSNVTLLSRRSSVEQHEDERQKDSD. The segment covering 23–36 has biased composition (low complexity); sequence SGSWSSSRRSNDSN. Asparagine 33 and asparagine 36 each carry an N-linked (GlcNAc...) asparagine glycan. Residues 44–58 show a composition bias toward basic and acidic residues; the sequence is SSVEQHEDERQKDSD. The next 6 membrane-spanning stretches (helical) occupy residues 105-125, 177-197, 210-230, 268-288, 315-335, and 345-365; these read VWLLSTFWVLAGCSISTVYYF, ALVVIAYWGSSYTAYGLGPLS, PWAITFLVTTQLTGYGLVGLY, VFMAIASAAFVYQWLPSFVFP, GFGLMDFSLDWNYVAFLSPLF, and FVGAALAVWITYPVAYFSDAL. N-linked (GlcNAc...) asparagine glycans are attached at residues asparagine 386 and asparagine 398. Transmembrane regions (helical) follow at residues 415 to 435, 478 to 498, 505 to 525, and 585 to 605; these read AMHFFWGFASASAIVTYAVLF, AWYALLLAVCLCLGTIQLYAG, WGLQLVVAISALFTLPCGMLF, and WELLVAQVYGTLLGPFVNWAV. The segment covering 629–649 has biased composition (gly residues); that stretch reads QGLGLGQGGGGGGGGGGGGGQ. Positions 629–657 are disordered; it reads QGLGLGQGGGGGGGGGGGGGQQQRAAGAH. 3 helical membrane passes run 668–688, 700–720, and 731–751; these read NFFSSSVIWGVMGPARVFGGG, WLLPSGFAVGAAAVLLLWLIH, and WPLHPAIIFHGASLFPVFPTT. N-linked (GlcNAc...) asparagine glycosylation occurs at asparagine 752. A helical membrane pass occupies residues 784–804; that stretch reads AGLDCGAQLVQMVLGLAFLVF.

This sequence belongs to the oligopeptide OPT transporter family.

The protein resides in the membrane. Functionally, oligopeptide transporter; part of the gene cluster that mediates the biosynthesis of the phomopsins, a group of hexapeptide mycotoxins which infects lupins and causes lupinosis disease in livestock. In Diaporthe leptostromiformis (Lupinosis disease fungus), this protein is Oligopeptide transporter phomP2'.